A 196-amino-acid chain; its full sequence is Peptidyl-tRNA hydrolase (196 aa).

Position 14 (Tyr14) interacts with tRNA. The active-site Proton acceptor is the His19. The tRNA site is built by Phe64, Asn66, and Asn112.

The protein belongs to the PTH family. In terms of assembly, monomer.

It is found in the cytoplasm. The enzyme catalyses an N-acyl-L-alpha-aminoacyl-tRNA + H2O = an N-acyl-L-amino acid + a tRNA + H(+). Functionally, hydrolyzes ribosome-free peptidyl-tRNAs (with 1 or more amino acids incorporated), which drop off the ribosome during protein synthesis, or as a result of ribosome stalling. In terms of biological role, catalyzes the release of premature peptidyl moieties from peptidyl-tRNA molecules trapped in stalled 50S ribosomal subunits, and thus maintains levels of free tRNAs and 50S ribosomes. The protein is Peptidyl-tRNA hydrolase of Solibacter usitatus (strain Ellin6076).